Reading from the N-terminus, the 467-residue chain is ATP-dependent protease ATPase subunit HslU (467 aa).

Residues Ile18, 60-65, Asp280, Glu345, and Arg417 contribute to the ATP site; that span reads GVGKTE.

The protein belongs to the ClpX chaperone family. HslU subfamily. As to quaternary structure, a double ring-shaped homohexamer of HslV is capped on each side by a ring-shaped HslU homohexamer. The assembly of the HslU/HslV complex is dependent on binding of ATP.

Its subcellular location is the cytoplasm. Functionally, ATPase subunit of a proteasome-like degradation complex; this subunit has chaperone activity. The binding of ATP and its subsequent hydrolysis by HslU are essential for unfolding of protein substrates subsequently hydrolyzed by HslV. HslU recognizes the N-terminal part of its protein substrates and unfolds these before they are guided to HslV for hydrolysis. The sequence is that of ATP-dependent protease ATPase subunit HslU from Lactobacillus helveticus (strain DPC 4571).